The primary structure comprises 285 residues: Tetraspanin-3 (285 aa).

The Cytoplasmic segment spans residues 1–6 (MRTSNH). Residues 7 to 27 (LIGLVNFLTFLLSIPILGGGI) traverse the membrane as a helical segment. Topologically, residues 28–43 (WLSSRANSTDCLRFLQ) are extracellular. Residue Asn34 is glycosylated (N-linked (GlcNAc...) asparagine). A helical membrane pass occupies residues 44 to 64 (WPLIVIGISIMVVSLAGFAGA). Residues 65–71 (CYRNKFL) are Cytoplasmic-facing. A helical membrane pass occupies residues 72–92 (MWLYLVVMLLIIAALIGFIIF). Over 93 to 235 (AYAVTDKGSG…LGSLKKSWRK (143 aa)) the chain is Extracellular. Asn187 carries an N-linked (GlcNAc...) asparagine glycan. The helical transmembrane segment at 236 to 256 (VSVINIVVLIILVIFYVIAYA) threads the bilayer. Topologically, residues 257–285 (AYRNVKRIDNDEPAGEARMTKSHPSHFHL) are cytoplasmic.

This sequence belongs to the tetraspanin (TM4SF) family.

The protein localises to the cell membrane. Its function is as follows. May be involved in the regulation of cell differentiation. This chain is Tetraspanin-3 (TET3), found in Arabidopsis thaliana (Mouse-ear cress).